Consider the following 378-residue polypeptide: Ribosomal RNA large subunit methyltransferase G (378 aa).

Belongs to the methyltransferase superfamily. RlmG family.

It localises to the cytoplasm. The enzyme catalyses guanosine(1835) in 23S rRNA + S-adenosyl-L-methionine = N(2)-methylguanosine(1835) in 23S rRNA + S-adenosyl-L-homocysteine + H(+). Specifically methylates the guanine in position 1835 (m2G1835) of 23S rRNA. This Salmonella agona (strain SL483) protein is Ribosomal RNA large subunit methyltransferase G.